The chain runs to 191 residues: Small ribosomal subunit protein uS5 (191 aa).

Residues 21–84 (LVDKLVTINR…ERAKRTMIRV (64 aa)) form the S5 DRBM domain. Residues 161–191 (PRHVASRRGKKAAELFGKREQGQTEAEVTNG) form a disordered region. Over residues 171 to 182 (KAAELFGKREQG) the composition is skewed to basic and acidic residues.

It belongs to the universal ribosomal protein uS5 family. Part of the 30S ribosomal subunit. Contacts proteins S4 and S8.

In terms of biological role, with S4 and S12 plays an important role in translational accuracy. Its function is as follows. Located at the back of the 30S subunit body where it stabilizes the conformation of the head with respect to the body. The polypeptide is Small ribosomal subunit protein uS5 (Gluconobacter oxydans (strain 621H) (Gluconobacter suboxydans)).